The chain runs to 256 residues: UPF0246 protein SPO0106 (256 aa).

It belongs to the UPF0246 family.

This is UPF0246 protein SPO0106 from Ruegeria pomeroyi (strain ATCC 700808 / DSM 15171 / DSS-3) (Silicibacter pomeroyi).